Reading from the N-terminus, the 520-residue chain is RING-type E3 ubiquitin-protein ligase PPIL2 (520 aa).

A U-box domain is found at 35–108 (RRLPFDHCSL…GKYHCPVLFT (74 aa)). Positions 197–217 (LKNTNAETRETLQELYKEFKG) form a coiled coil. Lysine 216 is covalently cross-linked (Glycyl lysine isopeptide (Lys-Gly) (interchain with G-Cter in SUMO2)). Residues 278-433 (KKGYVRLHTN…EEIRIDATTV (156 aa)) form the PPIase cyclophilin-type domain. The segment at 456 to 520 (APETKVKSSQ…SRGFGDFSSW (65 aa)) is disordered. Low complexity predominate over residues 463–474 (SSQPQAGSQGPQ). Serine 470 is subject to Phosphoserine. At lysine 482 the chain carries N6-acetyllysine.

It belongs to the cyclophilin-type PPIase family. PPIL2 subfamily. Component of the minor spliceosome, which splices U12-type introns. Within this complex, interacts with PRPF8/PRP8, EFTUD2/SNU114 and PLRG1. Interacts with isoform 2 of BSG. Interacts (via the PPIase cyclophilin-type domain) with CRNKL1; they may form a trimeric complex with HSP90. Highest expression in thymus, pancreas and testis. Also detected in heart, placenta, lung, liver, skeletal muscle, kidney, spleen, prostate, ovary, small intestine and colon. Poorly detected in brain and leukocytes. Strong protein expression in lymph node (cortical, paracortical and medullar regions), thyroid (follicular epithelial cells), testis (developing spermatozoa), stomach (cells lining the gastric pit), pancreas, kidney (proximal and distal-tubule cells and collecting duct cells but not in glomeruli), endometrium and colon (goblet cells). Moderate protein expression in spleen, prostate (epithelium and squamous cell carcinomas), placenta and adrenal gland. Weak protein expression in liver, heart, breast, ovary, and lung. No protein expression in brain and bladder. High protein expression in most lymphomas and melanomas.

It localises to the nucleus. It carries out the reaction S-ubiquitinyl-[E2 ubiquitin-conjugating enzyme]-L-cysteine + [acceptor protein]-L-lysine = [E2 ubiquitin-conjugating enzyme]-L-cysteine + N(6)-ubiquitinyl-[acceptor protein]-L-lysine.. The protein operates within protein modification; protein ubiquitination. Functionally, has a ubiquitin-protein ligase activity acting as an E3 ubiquitin protein ligase or as an ubiquitin-ubiquitin ligase promoting elongation of ubiquitin chains on substrates. By mediating 'Lys-48'-linked polyubiquitination of proteins could target them for proteasomal degradation. May also function as a chaperone, playing a role in transport to the cell membrane of BSG/Basigin for instance. Probable inactive PPIase with no peptidyl-prolyl cis-trans isomerase activity. As a component of the minor spliceosome, involved in the splicing of U12-type introns in pre-mRNAs. This Homo sapiens (Human) protein is RING-type E3 ubiquitin-protein ligase PPIL2.